The chain runs to 404 residues: MVFFMLIIDVNHGALTLAEEYLNLGYEVDVWDIYQKIKKSEDFKVKYQKLKEKFGNKLNLFFEQPNFEKYDRVIAPIHCPIDVDFIPFTDAVSKILKEKFGNIHKKIINVTGVKGKTTTTSLINHILKDKYSTYLHNSNFGSIAPPTILKVLNSLDIDKYDFFIFETSLGLIKCKYGAITNVLENYKIAGGRKDALTAKFSSLKNAELSFINKRDINRYDLNINHKCLNVVDVDRAKILDKYPLKFKYFDEIFEFSKNIFGLHFVENSLFAIEICKNLVDMEEIRYRLKTFTIKNRMEIKEINKKILVKNINPGLDVKAISYAIKDFLEVFGGDIYIGGDFGIVCEEIDVKKLSEVLKRFNCRYIFVGEIGKELLNYLNGGYIKSYDENKIKRDSLVILREKIK.

112 to 117 (GVKGKT) serves as a coordination point for ATP.

The protein belongs to the MurCDEF family.

It carries out the reaction 15,17(3)-seco-F430-17(3)-acid + ATP = coenzyme F430 + ADP + phosphate. Functionally, involved in the biosynthesis of the unique nickel-containing tetrapyrrole coenzyme F430, the prosthetic group of methyl-coenzyme M reductase (MCR), which plays a key role in methanogenesis and anaerobic methane oxidation. Catalyzes the activation the g-propionate side chain of 15,17(3)-seco-F430-17(3)-acid (seco-F430) for intramolecular C-C bond formation to yield the carbocyclic F ring of coenzyme F430. This Methanocaldococcus jannaschii (strain ATCC 43067 / DSM 2661 / JAL-1 / JCM 10045 / NBRC 100440) (Methanococcus jannaschii) protein is Coenzyme F(430) synthetase.